Here is a 433-residue protein sequence, read N- to C-terminus: UDP-N-acetylglucosamine 1-carboxyvinyltransferase (433 aa).

A phosphoenolpyruvate-binding site is contributed by 34–35 (KN). Arginine 104 contacts UDP-N-acetyl-alpha-D-glucosamine. The active-site Proton donor is cysteine 128. Cysteine 128 is modified (2-(S-cysteinyl)pyruvic acid O-phosphothioketal). Residues aspartate 320 and isoleucine 342 each contribute to the UDP-N-acetyl-alpha-D-glucosamine site.

This sequence belongs to the EPSP synthase family. MurA subfamily.

The protein resides in the cytoplasm. It carries out the reaction phosphoenolpyruvate + UDP-N-acetyl-alpha-D-glucosamine = UDP-N-acetyl-3-O-(1-carboxyvinyl)-alpha-D-glucosamine + phosphate. It participates in cell wall biogenesis; peptidoglycan biosynthesis. Functionally, cell wall formation. Adds enolpyruvyl to UDP-N-acetylglucosamine. The chain is UDP-N-acetylglucosamine 1-carboxyvinyltransferase from Parasynechococcus marenigrum (strain WH8102).